The chain runs to 570 residues: Membrane protein insertase YidC (570 aa).

The span at 31–60 (QQPVAQTPSVTIDSNGADSSALLNSPNTGE) shows a compositional bias: polar residues. Positions 31-79 (QQPVAQTPSVTIDSNGADSSALLNSPNTGELDTPETASKPATAEDSNIS) are disordered. Helical transmembrane passes span 230–250 (PTFS…STPE), 378–398 (WGIA…HLSA), 444–464 (LGGC…YWVL), 487–507 (PYFV…SLNP), and 522–542 (PIIF…YWLV).

Belongs to the OXA1/ALB3/YidC family. Type 1 subfamily. Interacts with the Sec translocase complex via SecD. Specifically interacts with transmembrane segments of nascent integral membrane proteins during membrane integration.

The protein localises to the cell inner membrane. In terms of biological role, required for the insertion and/or proper folding and/or complex formation of integral membrane proteins into the membrane. Involved in integration of membrane proteins that insert both dependently and independently of the Sec translocase complex, as well as at least some lipoproteins. Aids folding of multispanning membrane proteins. The polypeptide is Membrane protein insertase YidC (Hahella chejuensis (strain KCTC 2396)).